We begin with the raw amino-acid sequence, 103 residues long: Alpha-ketoglutarate dehydrogenase component 4 (103 aa).

Met-1 carries the post-translational modification N-acetylmethionine. Residue Lys-5 is modified to N6-succinyllysine. Residues 23-70 form a disordered region; sequence IRFPDRRDNPKPNVSEVLRSAGLPSHTSSISQHSKGSKSPDWLMHQGP. The segment covering 47–61 has biased composition (low complexity); it reads SHTSSISQHSKGSKS. Residues Ser-61 and Ser-90 each carry the phosphoserine modification.

It belongs to the alpha-ketoglutarate dehydrogenase component 4 family. In terms of assembly, component of the 2-oxoglutarate dehydrogenase complex (OGDHC), composed of OGDH (2-oxoglutarate dehydrogenase; also called E1 subunit), DLST (dihydrolipoamide succinyltransferase; also called E2 subunit) and DLD (dihydrolipoamide dehydrogenase; also called E3 subunit), and the assembly factor KGD4. Within OGDHC complex, interacts (via N-terminus) with E3 subunit and (via C-terminus) with E2 subunit.

The protein resides in the mitochondrion. In terms of biological role, molecular adapter that is necessary to form a stable 2-oxoglutarate dehydrogenase enzyme complex (OGDHC). Enables the specific recruitment of E3 subunit to E2 subunit in the 2-oxoglutarate dehydrogenase complex (OGDHC). The chain is Alpha-ketoglutarate dehydrogenase component 4 (KGD4) from Bos taurus (Bovine).